Here is a 269-residue protein sequence, read N- to C-terminus: 4-hydroxy-tetrahydrodipicolinate reductase (269 aa).

NAD(+)-binding positions include 9–14 and Glu-35; that span reads GAGGRM. Arg-36 contacts NADP(+). NAD(+)-binding positions include 98–100 and 122–125; these read GTT and ASNY. His-155 acts as the Proton donor/acceptor in catalysis. Position 156 (His-156) interacts with (S)-2,3,4,5-tetrahydrodipicolinate. The active-site Proton donor is the Lys-159. Residue 165 to 166 participates in (S)-2,3,4,5-tetrahydrodipicolinate binding; sequence GT.

It belongs to the DapB family.

The protein localises to the cytoplasm. The enzyme catalyses (S)-2,3,4,5-tetrahydrodipicolinate + NAD(+) + H2O = (2S,4S)-4-hydroxy-2,3,4,5-tetrahydrodipicolinate + NADH + H(+). The catalysed reaction is (S)-2,3,4,5-tetrahydrodipicolinate + NADP(+) + H2O = (2S,4S)-4-hydroxy-2,3,4,5-tetrahydrodipicolinate + NADPH + H(+). Its pathway is amino-acid biosynthesis; L-lysine biosynthesis via DAP pathway; (S)-tetrahydrodipicolinate from L-aspartate: step 4/4. Catalyzes the conversion of 4-hydroxy-tetrahydrodipicolinate (HTPA) to tetrahydrodipicolinate. The sequence is that of 4-hydroxy-tetrahydrodipicolinate reductase from Actinobacillus pleuropneumoniae serotype 3 (strain JL03).